The sequence spans 533 residues: DNA-directed RNA polymerase III subunit RPC3 (533 aa).

The residue at position 194 (Ser194) is a Phosphoserine. Positions 197–230 are disordered; that stretch reads GKGKRRRSSDEDATGEPKAKRPKQTTDNKEPIPD. Positions 211 to 228 are enriched in basic and acidic residues; that stretch reads GEPKAKRPKQTTDNKEPI.

The protein belongs to the eukaryotic RPC3/POLR3C RNA polymerase subunit family. In terms of assembly, component of the RNA polymerase III complex consisting of 17 subunits: a ten-subunit horseshoe-shaped catalytic core composed of POLR3A/RPC1, POLR3B/RPC2, POLR1C/RPAC1, POLR1D/RPAC2, POLR3K/RPC10, POLR2E/RPABC1, POLR2F/RPABC2, POLR2H/RPABC3, POLR2K/RPABC4 and POLR2L/RPABC5; a mobile stalk composed of two subunits POLR3H/RPC8 and CRCP/RPC9, protruding from the core and functioning primarily in transcription initiation; and additional subunits homologous to general transcription factors of the RNA polymerase II machinery, POLR3C/RPC3-POLR3F/RPC6-POLR3G/RPC7 heterotrimer required for transcription initiation and POLR3D/RPC4-POLR3E/RPC5 heterodimer involved in both transcription initiation and termination. Directly interacts with POLR3G/RPC7 and POLR3GL. Directly interacts with POLR3F/RPC6. Interacts with GTF3C4. As part of the RNA polymerase III complex, interacts with PKP2.

It is found in the nucleus. Functionally, DNA-dependent RNA polymerase catalyzes the transcription of DNA into RNA using the four ribonucleoside triphosphates as substrates. Specific peripheric component of RNA polymerase III (Pol III) which synthesizes small non-coding RNAs including 5S rRNA, snRNAs, tRNAs and miRNAs from at least 500 distinct genomic loci. Part of POLR3C/RPC3-POLR3F/RPC6-POLR3G/RPC7 heterotrimer, coordinates the dynamics of Pol III stalk and clamp modules during the transition from apo to elongation state. Pol III plays a key role in sensing and limiting infection by intracellular bacteria and DNA viruses. Acts as a nuclear and cytosolic DNA sensor involved in innate immune response. Can sense non-self dsDNA that serves as template for transcription into dsRNA. The non-self RNA polymerase III transcripts, such as Epstein-Barr virus-encoded RNAs (EBERs) induce type I interferon and NF-kappa-B through the RIG-I pathway. Preferentially binds single-stranded DNA (ssDNA) in a sequence-independent manner. This Bos taurus (Bovine) protein is DNA-directed RNA polymerase III subunit RPC3 (POLR3C).